We begin with the raw amino-acid sequence, 235 residues long: MPKLGKKYRNAVKGVDLSLHLSFEDAVTQSIQTSFANFDETVDIAIGLGVDPKYSDQMVRGAVTLPYGLGKTVRVAVFCKGEKEAEAKEAGADYAGAEELVAKIKDGWLDFDAAVATPDVMALVGQVGRQLGPRGLMPNAKTGTVTFNVTNAIKELKAGRIDFKVDKAGVLHAPLGKVSFGSEKILGNLKSLVETVNRLKPSSAKGTYIKSMAISTTMGPGFKIDTNLVKKFLES.

The protein belongs to the universal ribosomal protein uL1 family. Part of the 50S ribosomal subunit.

In terms of biological role, binds directly to 23S rRNA. The L1 stalk is quite mobile in the ribosome, and is involved in E site tRNA release. Functionally, protein L1 is also a translational repressor protein, it controls the translation of the L11 operon by binding to its mRNA. The protein is Large ribosomal subunit protein uL1 of Lawsonia intracellularis (strain PHE/MN1-00).